The following is a 578-amino-acid chain: ATP-dependent RNA helicase has-1 (578 aa).

The segment at 1-91 is disordered; sequence MASEFSKKRK…KDAEAGDELT (91 aa). The span at 13 to 26 shows a compositional bias: basic and acidic residues; the sequence is DAKIATEDGAATDK. Positions 27 to 36 are enriched in basic residues; sequence KTKKVKKDKK. Composition is skewed to acidic residues over residues 43 to 54 and 77 to 88; these read EVVEDATPEEEN and EDSDDKDAEAGD. The Q motif signature appears at 107 to 135; the sequence is TDFSELNLSDKTMKAIAEMGFTKMTEIQR. The region spanning 138 to 313 is the Helicase ATP-binding domain; that stretch reads IPPLLAGKDV…RISLRPGPLY (176 aa). 151-158 provides a ligand contact to ATP; the sequence is AKTGSGKT. Residues 260–263 carry the DEAD box motif; the sequence is DEAD. The Bipartite nuclear localization signal motif lies at 339-355; the sequence is KRFLLLFSFLKKMQKKK. The Helicase C-terminal domain maps to 343 to 497; it reads LLFSFLKKMQ…NVQSQLEKLI (155 aa). The interval 556 to 578 is disordered; that stretch reads SMSRDKKQTSRRAYGSQPKQNRH.

Belongs to the DEAD box helicase family. DDX18/HAS1 subfamily. As to quaternary structure, associates in the nucleolus with the 60S and pre-60S ribosomal subunits.

It localises to the nucleus. The protein localises to the nucleolus. The enzyme catalyses ATP + H2O = ADP + phosphate + H(+). In terms of biological role, ATP-dependent RNA helicase involved in 40S ribosomal subunit biogenesis. Required for the processing and cleavage of 35S pre-rRNA at sites A0, A1, and A2, leading to mature 18S rRNA. The polypeptide is ATP-dependent RNA helicase has-1 (has-1) (Neurospora crassa (strain ATCC 24698 / 74-OR23-1A / CBS 708.71 / DSM 1257 / FGSC 987)).